Consider the following 110-residue polypeptide: UPF0122 protein lin1916 (110 aa).

This sequence belongs to the UPF0122 family.

Its function is as follows. Might take part in the signal recognition particle (SRP) pathway. This is inferred from the conservation of its genetic proximity to ftsY/ffh. May be a regulatory protein. The polypeptide is UPF0122 protein lin1916 (Listeria innocua serovar 6a (strain ATCC BAA-680 / CLIP 11262)).